A 936-amino-acid chain; its full sequence is E3 ubiquitin-protein ligase ZNRF3 (936 aa).

Residues 1 to 31 (MRPRSGGRPGATGRRRRRLRRRPRGLRCSRL) form a disordered region. The first 55 residues, 1 to 55 (MRPRSGGRPGATGRRRRRLRRRPRGLRCSRLPPPPPLPLLLGLLLAAAGPGAARA), serve as a signal peptide directing secretion. Over residues 13-27 (GRRRRRLRRRPRGLR) the composition is skewed to basic residues. Over 56–219 (KETAFVEVVL…PRQPTEYFDM (164 aa)) the chain is Extracellular. A helical membrane pass occupies residues 220–240 (GIFLAFFVVVSLVCLILLVKI). The Cytoplasmic segment spans residues 241–936 (KLKQRRSQNS…HSADSSSPGA (696 aa)). An RING-type; atypical zinc finger spans residues 293 to 334 (CAICLEKYIDGEELRVIPCTHRFHRKCVDPWLLQHHTCPHCR). 4 disordered regions span residues 608-693 (SEAG…SPGA), 739-758 (LYEGSGPAGGEPQSGSSQGL), 849-875 (THSLGSWGGTRGPDTPRPHRGLGATRE), and 892-936 (CPPE…SPGA). Positions 654–684 (SGDQVSTCSLEMNYSSNSSLEHRGPNSSTSE) are enriched in polar residues. Residues 913–922 (ESSTTATEAA) show a composition bias toward low complexity.

It belongs to the ZNRF3 family. In terms of assembly, interacts with LRP6, FZD4, FZD5, FZD6 and FZD8. Interacts with RSPO1; interaction promotes indirect interaction with LGR4 and membrane clearance of ZNRF3. Also interacts with RSPO2. Interacts with LMBR1L.

The protein localises to the cell membrane. The catalysed reaction is S-ubiquitinyl-[E2 ubiquitin-conjugating enzyme]-L-cysteine + [acceptor protein]-L-lysine = [E2 ubiquitin-conjugating enzyme]-L-cysteine + N(6)-ubiquitinyl-[acceptor protein]-L-lysine.. Its pathway is protein modification; protein ubiquitination. Its activity is regulated as follows. Negatively regulated by R-spondin proteins such as RSPO1: interaction with RSPO1 induces the indirect association between ZNRF3 and LGR4, promoting membrane clearance of ZNRF3. In terms of biological role, E3 ubiquitin-protein ligase that acts as a negative regulator of the Wnt signaling pathway by mediating the ubiquitination and subsequent degradation of Wnt receptor complex components Frizzled and LRP6. Acts on both canonical and non-canonical Wnt signaling pathway. Acts as a tumor suppressor in the intestinal stem cell zone by inhibiting the Wnt signaling pathway, thereby restricting the size of the intestinal stem cell zone. Along with RSPO2 and RNF43, constitutes a master switch that governs limb specification. In Homo sapiens (Human), this protein is E3 ubiquitin-protein ligase ZNRF3 (ZNRF3).